We begin with the raw amino-acid sequence, 387 residues long: Killer cell lectin-like receptor subfamily G member 2 (387 aa).

The interval Met1 to Ala105 is disordered. The segment covering Ala15–Trp27 has biased composition (basic and acidic residues). Position 143 is a phosphoserine (Ser143). The segment at Gln155 to Ala174 is disordered. Residues Trp241–Ala261 form a helical membrane-spanning segment. Residues Ser278–Ala383 enclose the C-type lectin domain. 2 disulfide bridges follow: Cys299–Cys382 and Cys361–Cys374.

Its subcellular location is the membrane. This Mus musculus (Mouse) protein is Killer cell lectin-like receptor subfamily G member 2 (Klrg2).